Consider the following 197-residue polypeptide: Interleukin-17C (197 aa).

Positions 1 to 18 (MTLLPGLLFLTWLHTCLA) are cleaved as a signal peptide. Cystine bridges form between Cys-129/Cys-189 and Cys-134/Cys-191.

It belongs to the IL-17 family. Binds to a heterodimer formed by IL17RA and IL17RE.

The protein resides in the secreted. Its function is as follows. Cytokine that plays a crucial role in innate immunity of the epithelium, including to intestinal bacterial pathogens, in an autocrine manner. Stimulates the production of antibacterial peptides and pro-inflammatory molecules for host defense by signaling through the NF-kappa-B and MAPK pathways. Acts synergically with IL22 in inducing the expression of antibacterial peptides, including S100A8, S100A9, REG3A and REG3G. Synergy is also observed with TNF and IL1B in inducing DEFB2 from keratinocytes. Depending on the type of insult, may have both protective and pathogenic properties, either by maintaining epithelial homeostasis after an inflammatory challenge or by promoting inflammatory phenotype. Enhanced IL17C/IL17RE signaling may also lead to greater susceptibility to autoimmune diseases. The protein is Interleukin-17C (IL17C) of Homo sapiens (Human).